The chain runs to 323 residues: Homoserine kinase (323 aa).

97–107 lines the ATP pocket; sequence PHGRGMGSSGA.

This sequence belongs to the GHMP kinase family. Homoserine kinase subfamily.

It localises to the cytoplasm. The enzyme catalyses L-homoserine + ATP = O-phospho-L-homoserine + ADP + H(+). The protein operates within amino-acid biosynthesis; L-threonine biosynthesis; L-threonine from L-aspartate: step 4/5. Catalyzes the ATP-dependent phosphorylation of L-homoserine to L-homoserine phosphate. The chain is Homoserine kinase from Leifsonia xyli subsp. xyli (strain CTCB07).